The following is a 299-amino-acid chain: Ribonuclease H2 subunit A (299 aa).

Position 1 is an N-acetylmethionine (Met-1). Residues 28-251 (PCVLGVDEAG…AQSILESEAE (224 aa)) form the RNase H type-2 domain. Asp-34, Glu-35, and Asp-142 together coordinate a divalent metal cation. A phosphothreonine mark is found at Thr-205 and Thr-217. The interval 250–272 (AEDVKWEDSETGDPKGPGKIKSY) is disordered. Ser-258 carries the post-translational modification Phosphoserine.

This sequence belongs to the RNase HII family. Eukaryotic subfamily. In terms of assembly, the RNase H2 complex is a heterotrimer composed of the catalytic subunit RNASEH2A and the non-catalytic subunits RNASEH2B and RNASEH2C. Mn(2+) serves as cofactor. Requires Mg(2+) as cofactor.

It localises to the nucleus. The catalysed reaction is Endonucleolytic cleavage to 5'-phosphomonoester.. Functionally, catalytic subunit of RNase HII, an endonuclease that specifically degrades the RNA of RNA:DNA hybrids. Participates in DNA replication, possibly by mediating the removal of lagging-strand Okazaki fragment RNA primers during DNA replication. Mediates the excision of single ribonucleotides from DNA:RNA duplexes. The polypeptide is Ribonuclease H2 subunit A (RNASEH2A) (Bos taurus (Bovine)).